The sequence spans 296 residues: Cytidine deaminase (296 aa).

CMP/dCMP-type deaminase domains follow at residues 47-167 (ELNE…FGPS) and 186-296 (DSND…VEPE). 88-90 (NIE) contributes to the substrate binding site. Histidine 101 contributes to the Zn(2+) binding site. The Proton donor role is filled by glutamate 103. Positions 128 and 131 each coordinate Zn(2+).

The protein belongs to the cytidine and deoxycytidylate deaminase family. As to quaternary structure, homodimer. It depends on Zn(2+) as a cofactor.

The enzyme catalyses cytidine + H2O + H(+) = uridine + NH4(+). It catalyses the reaction 2'-deoxycytidine + H2O + H(+) = 2'-deoxyuridine + NH4(+). Its function is as follows. This enzyme scavenges exogenous and endogenous cytidine and 2'-deoxycytidine for UMP synthesis. This Shewanella pealeana (strain ATCC 700345 / ANG-SQ1) protein is Cytidine deaminase.